The chain runs to 458 residues: tRNA modification GTPase MnmE (458 aa).

3 residues coordinate (6S)-5-formyl-5,6,7,8-tetrahydrofolate: R22, E84, and R123. One can recognise a TrmE-type G domain in the interval 220-379 (GIATAIIGRP…LETAIADLFF (160 aa)). N230 contributes to the K(+) binding site. Residues 230 to 235 (NVGKSS), 249 to 255 (TDIAGTT), and 274 to 277 (DTAG) contribute to the GTP site. S234 contributes to the Mg(2+) binding site. The K(+) site is built by T249, I251, and T254. T255 provides a ligand contact to Mg(2+). K458 is a (6S)-5-formyl-5,6,7,8-tetrahydrofolate binding site.

This sequence belongs to the TRAFAC class TrmE-Era-EngA-EngB-Septin-like GTPase superfamily. TrmE GTPase family. In terms of assembly, homodimer. Heterotetramer of two MnmE and two MnmG subunits. The cofactor is K(+).

Its subcellular location is the cytoplasm. In terms of biological role, exhibits a very high intrinsic GTPase hydrolysis rate. Involved in the addition of a carboxymethylaminomethyl (cmnm) group at the wobble position (U34) of certain tRNAs, forming tRNA-cmnm(5)s(2)U34. The sequence is that of tRNA modification GTPase MnmE from Bacillus cereus (strain ATCC 10987 / NRS 248).